A 425-amino-acid polypeptide reads, in one-letter code: Histidine--tRNA ligase (425 aa).

This sequence belongs to the class-II aminoacyl-tRNA synthetase family. In terms of assembly, homodimer.

The protein resides in the cytoplasm. The catalysed reaction is tRNA(His) + L-histidine + ATP = L-histidyl-tRNA(His) + AMP + diphosphate + H(+). This is Histidine--tRNA ligase from Histophilus somni (strain 129Pt) (Haemophilus somnus).